Consider the following 253-residue polypeptide: 1-(5-phosphoribosyl)-5-[(5-phosphoribosylamino)methylideneamino] imidazole-4-carboxamide isomerase (253 aa).

Residue Asp-8 is the Proton acceptor of the active site. Residue Asp-131 is the Proton donor of the active site.

The protein belongs to the HisA/HisF family.

It localises to the cytoplasm. The enzyme catalyses 1-(5-phospho-beta-D-ribosyl)-5-[(5-phospho-beta-D-ribosylamino)methylideneamino]imidazole-4-carboxamide = 5-[(5-phospho-1-deoxy-D-ribulos-1-ylimino)methylamino]-1-(5-phospho-beta-D-ribosyl)imidazole-4-carboxamide. It functions in the pathway amino-acid biosynthesis; L-histidine biosynthesis; L-histidine from 5-phospho-alpha-D-ribose 1-diphosphate: step 4/9. This is 1-(5-phosphoribosyl)-5-[(5-phosphoribosylamino)methylideneamino] imidazole-4-carboxamide isomerase from Polynucleobacter asymbioticus (strain DSM 18221 / CIP 109841 / QLW-P1DMWA-1) (Polynucleobacter necessarius subsp. asymbioticus).